Reading from the N-terminus, the 470-residue chain is Asparagine--tRNA ligase (470 aa).

This sequence belongs to the class-II aminoacyl-tRNA synthetase family. In terms of assembly, homodimer.

The protein resides in the cytoplasm. It catalyses the reaction tRNA(Asn) + L-asparagine + ATP = L-asparaginyl-tRNA(Asn) + AMP + diphosphate + H(+). This is Asparagine--tRNA ligase from Blochmanniella floridana.